The chain runs to 188 residues: Ribose 1,5-bisphosphate phosphokinase PhnN (188 aa).

Belongs to the ribose 1,5-bisphosphokinase family.

The catalysed reaction is alpha-D-ribose 1,5-bisphosphate + ATP = 5-phospho-alpha-D-ribose 1-diphosphate + ADP. It functions in the pathway metabolic intermediate biosynthesis; 5-phospho-alpha-D-ribose 1-diphosphate biosynthesis; 5-phospho-alpha-D-ribose 1-diphosphate from D-ribose 5-phosphate (route II): step 3/3. Catalyzes the phosphorylation of ribose 1,5-bisphosphate to 5-phospho-D-ribosyl alpha-1-diphosphate (PRPP). This is Ribose 1,5-bisphosphate phosphokinase PhnN from Dickeya zeae (strain Ech586) (Dickeya dadantii (strain Ech586)).